An 839-amino-acid chain; its full sequence is Protein translocase subunit SecA (839 aa).

Residues Q85, 103–107 (GEGKT), and D493 contribute to the ATP site. Positions 780 to 790 (QIHEQERERAS) are enriched in basic and acidic residues. Residues 780-839 (QIHEQERERASQRATTAAPQNIQSQQSANTDDLPKVERNEACPCGSGKKFKNCHGRKSFS) form a disordered region. Positions 791–809 (QRATTAAPQNIQSQQSANT) are enriched in polar residues. Zn(2+) contacts are provided by C821, C823, C832, and H833. The segment covering 827 to 839 (KKFKNCHGRKSFS) has biased composition (basic residues).

This sequence belongs to the SecA family. In terms of assembly, monomer and homodimer. Part of the essential Sec protein translocation apparatus which comprises SecA, SecYEG and auxiliary proteins SecDF. Other proteins may also be involved. Zn(2+) is required as a cofactor.

It localises to the cell membrane. It is found in the cytoplasm. The catalysed reaction is ATP + H2O + cellular proteinSide 1 = ADP + phosphate + cellular proteinSide 2.. Its function is as follows. Part of the Sec protein translocase complex. Interacts with the SecYEG preprotein conducting channel. Has a central role in coupling the hydrolysis of ATP to the transfer of proteins into and across the cell membrane, serving as an ATP-driven molecular motor driving the stepwise translocation of polypeptide chains across the membrane. The polypeptide is Protein translocase subunit SecA (Streptococcus pyogenes serotype M6 (strain ATCC BAA-946 / MGAS10394)).